We begin with the raw amino-acid sequence, 297 residues long: Acetyl-coenzyme A carboxylase carboxyl transferase subunit beta (297 aa).

In terms of domain architecture, CoA carboxyltransferase N-terminal spans L27–V296. Zn(2+) is bound by residues C31, C34, C50, and C53. Residues C31 to C53 form a C4-type zinc finger.

The protein belongs to the AccD/PCCB family. In terms of assembly, acetyl-CoA carboxylase is a heterohexamer composed of biotin carboxyl carrier protein (AccB), biotin carboxylase (AccC) and two subunits each of ACCase subunit alpha (AccA) and ACCase subunit beta (AccD). The cofactor is Zn(2+).

It localises to the cytoplasm. The enzyme catalyses N(6)-carboxybiotinyl-L-lysyl-[protein] + acetyl-CoA = N(6)-biotinyl-L-lysyl-[protein] + malonyl-CoA. The protein operates within lipid metabolism; malonyl-CoA biosynthesis; malonyl-CoA from acetyl-CoA: step 1/1. In terms of biological role, component of the acetyl coenzyme A carboxylase (ACC) complex. Biotin carboxylase (BC) catalyzes the carboxylation of biotin on its carrier protein (BCCP) and then the CO(2) group is transferred by the transcarboxylase to acetyl-CoA to form malonyl-CoA. This chain is Acetyl-coenzyme A carboxylase carboxyl transferase subunit beta, found in Pseudomonas entomophila (strain L48).